A 520-amino-acid polypeptide reads, in one-letter code: Cytochrome P450 4F2 (520 aa).

Positions 1 to 4 (MSQL) are excised as a propeptide. 2 residues coordinate heme: glutamate 328 and cysteine 468.

It belongs to the cytochrome P450 family. It depends on heme as a cofactor. Liver. Also present in kidney: specifically expressed in the S2 and S3 segments of proximal tubules in cortex and outer medulla.

Its subcellular location is the microsome membrane. It localises to the endoplasmic reticulum membrane. The enzyme catalyses an organic molecule + reduced [NADPH--hemoprotein reductase] + O2 = an alcohol + oxidized [NADPH--hemoprotein reductase] + H2O + H(+). The catalysed reaction is (5Z,8Z,11Z,14Z)-eicosatetraenoate + reduced [NADPH--hemoprotein reductase] + O2 = 20-hydroxy-(5Z,8Z,11Z,14Z)-eicosatetraenoate + oxidized [NADPH--hemoprotein reductase] + H2O + H(+). It catalyses the reaction (5Z,8Z,11Z)-eicosatrienoate + reduced [NADPH--hemoprotein reductase] + O2 = 20-hydroxy-(5Z,8Z,11Z)-eicosatrienoate + oxidized [NADPH--hemoprotein reductase] + H2O + H(+). It carries out the reaction (5Z,8Z,11Z,14Z,17Z)-eicosapentaenoate + reduced [NADPH--hemoprotein reductase] + O2 = 20-hydroxy-(5Z,8Z,11Z,14Z,17Z)-eicosapentaenoate + oxidized [NADPH--hemoprotein reductase] + H2O + H(+). The enzyme catalyses (4Z,7Z,10Z,13Z,16Z,19Z)-docosahexaenoate + reduced [NADPH--hemoprotein reductase] + O2 = 22-hydroxy-(4Z,7Z,10Z,13Z,16Z,19Z)-docosahexaenoate + oxidized [NADPH--hemoprotein reductase] + H2O + H(+). The catalysed reaction is 8,9-epoxy-(5Z,11Z,14Z)-eicosatrienoate + reduced [NADPH--hemoprotein reductase] + O2 = 20-hydroxy-8,9-epoxy-(5Z,11Z,14Z)-eicosatrienoate + oxidized [NADPH--hemoprotein reductase] + H2O + H(+). It catalyses the reaction (9S,10R)-epoxy-octadecanoate + reduced [NADPH--hemoprotein reductase] + O2 = 18-hydroxy-(9S,10R)-epoxy-octadecanoate + oxidized [NADPH--hemoprotein reductase] + H2O + H(+). It carries out the reaction (9R,10S)-epoxy-octadecanoate + reduced [NADPH--hemoprotein reductase] + O2 = 18-hydroxy-(9R,10S)-epoxy-octadecanoate + oxidized [NADPH--hemoprotein reductase] + H2O + H(+). The enzyme catalyses 12,13-epoxy-(9Z)-octadecenoate + reduced [NADPH--hemoprotein reductase] + O2 = 18-hydroxy-12,13-epoxy-(9Z)-octadecenoate + oxidized [NADPH--hemoprotein reductase] + H2O + H(+). The catalysed reaction is 9,10-epoxy-(12Z)-octadecenoate + reduced [NADPH--hemoprotein reductase] + O2 = 18-hydroxy-9,10-epoxy-(12Z)-octadecenoate + oxidized [NADPH--hemoprotein reductase] + H2O + H(+). It catalyses the reaction 8-hydroxy-(5Z,9E,11Z,14Z)-eicosatetraenoate + reduced [NADPH--hemoprotein reductase] + O2 = 8,20-dihydroxy-(5Z,9E,11Z,14Z)-eicosatetraenoate + oxidized [NADPH--hemoprotein reductase] + H2O + H(+). It carries out the reaction 12-hydroxy-(5Z,8Z,10E,14Z)-eicosatetraenoate + reduced [NADPH--hemoprotein reductase] + O2 = 12,20-dihydroxy-(5Z,8Z,10E,14Z)-eicosatetraenoate + oxidized [NADPH--hemoprotein reductase] + H2O + H(+). The enzyme catalyses 12-hydroxyoctadecanoate + reduced [NADPH--hemoprotein reductase] + O2 = 12,18-dihydroxyoctadecanoate + oxidized [NADPH--hemoprotein reductase] + H2O + H(+). The catalysed reaction is docosanoate + reduced [NADPH--hemoprotein reductase] + O2 = 22-hydroxydocosanoate + oxidized [NADPH--hemoprotein reductase] + H2O + H(+). It catalyses the reaction 22-hydroxydocosanoate + reduced [NADPH--hemoprotein reductase] + O2 = 22-oxodocosanoate + oxidized [NADPH--hemoprotein reductase] + 2 H2O + H(+). It carries out the reaction 22-oxodocosanoate + reduced [NADPH--hemoprotein reductase] + O2 = docosanedioate + oxidized [NADPH--hemoprotein reductase] + H2O + 2 H(+). The enzyme catalyses tetracosanoate + reduced [NADPH--hemoprotein reductase] + O2 = 24-hydroxytetracosanoate + oxidized [NADPH--hemoprotein reductase] + H2O + H(+). The catalysed reaction is hexacosanoate + reduced [NADPH--hemoprotein reductase] + O2 = 26-hydroxyhexacosanoate + oxidized [NADPH--hemoprotein reductase] + H2O + H(+). It catalyses the reaction 26-hydroxyhexacosanoate + reduced [NADPH--hemoprotein reductase] + O2 = 26-oxohexacosanoate + oxidized [NADPH--hemoprotein reductase] + 2 H2O + H(+). It carries out the reaction 26-oxohexacosanoate + reduced [NADPH--hemoprotein reductase] + O2 = hexacosanedioate + oxidized [NADPH--hemoprotein reductase] + H2O + 2 H(+). The enzyme catalyses 3-hydroxyoctadecanoate + reduced [NADPH--hemoprotein reductase] + O2 = 3,18-dihydroxyoctadecanoate + oxidized [NADPH--hemoprotein reductase] + H2O + H(+). The catalysed reaction is 3-hydroxyhexadecanoate + reduced [NADPH--hemoprotein reductase] + O2 = 3,16-dihydroxyhexadecanoate + oxidized [NADPH--hemoprotein reductase] + H2O + H(+). It catalyses the reaction leukotriene B4 + reduced [NADPH--hemoprotein reductase] + O2 = 20-hydroxy-leukotriene B4 + oxidized [NADPH--hemoprotein reductase] + H2O + H(+). It carries out the reaction 6-trans-leukotriene B4 + reduced [NADPH--hemoprotein reductase] + O2 = 20-hydroxy-6-trans-leukotriene B4 + oxidized [NADPH--hemoprotein reductase] + H2O + H(+). The enzyme catalyses lipoxin A4 + reduced [NADPH--hemoprotein reductase] + O2 = 20-hydroxy-lipoxin A4 + oxidized [NADPH--hemoprotein reductase] + H2O + H(+). The catalysed reaction is menaquinone-4 + reduced [NADPH--hemoprotein reductase] + O2 = omega-hydroxymenaquinone-4 + oxidized [NADPH--hemoprotein reductase] + H2O + H(+). It catalyses the reaction phylloquinone + reduced [NADPH--hemoprotein reductase] + O2 = omega-hydroxyphylloquinone + oxidized [NADPH--hemoprotein reductase] + H2O + H(+). It carries out the reaction (+)-alpha-tocopherol + reduced [NADPH--hemoprotein reductase] + O2 = 13-hydroxy-alpha-tocopherol + oxidized [NADPH--hemoprotein reductase] + H2O + H(+). The enzyme catalyses gamma-tocopherol + NADPH + O2 + H(+) = 13-hydroxy-gamma-tocopherol + NADP(+) + H2O. It participates in lipid metabolism; arachidonate metabolism. Its pathway is lipid metabolism; leukotriene B4 degradation. The protein operates within cofactor degradation; phylloquinone degradation. With respect to regulation, inhibited by dietary sesamin. Functionally, a cytochrome P450 monooxygenase involved in the metabolism of various endogenous substrates, including fatty acids, eicosanoids and vitamins. Mechanistically, uses molecular oxygen inserting one oxygen atom into a substrate, and reducing the second into a water molecule, with two electrons provided by NADPH via cytochrome P450 reductase (CPR; NADPH-ferrihemoprotein reductase). Catalyzes predominantly the oxidation of the terminal carbon (omega-oxidation) of long- and very long-chain fatty acids. Displays high omega-hydroxylase activity toward polyunsaturated fatty acids (PUFAs). Participates in the conversion of arachidonic acid to omega-hydroxyeicosatetraenoic acid (20-HETE), a signaling molecule acting both as vasoconstrictive and natriuretic with overall effect on arterial blood pressure. Plays a role in the oxidative inactivation of eicosanoids, including both pro-inflammatory and anti-inflammatory mediators such as leukotriene B4 (LTB4), lipoxin A4 (LXA4), and several HETEs. Catalyzes omega-hydroxylation of 3-hydroxy fatty acids. Converts monoepoxides of linoleic acid leukotoxin and isoleukotoxin to omega-hydroxylated metabolites. Contributes to the degradation of very long-chain fatty acids (VLCFAs) by catalyzing successive omega-oxidations and chain shortening. Plays an important role in vitamin metabolism by chain shortening. Catalyzes omega-hydroxylation of the phytyl chain of tocopherols (forms of vitamin E), with preference for gamma-tocopherols over alpha-tocopherols, thus promoting retention of alpha-tocopherols in tissues. Omega-hydroxylates and inactivates phylloquinone (vitamin K1), and menaquinone-4 (MK-4, a form of vitamin K2), both acting as cofactors in blood coagulation. In Homo sapiens (Human), this protein is Cytochrome P450 4F2.